A 512-amino-acid chain; its full sequence is Ribose import ATP-binding protein RbsA (512 aa).

ABC transporter domains follow at residues 6-242 and 252-496; these read LELR…VNRE and VPAG…TGAQ. 38–45 contacts ATP; the sequence is GENGAGKS.

The protein belongs to the ABC transporter superfamily. Ribose importer (TC 3.A.1.2.1) family. As to quaternary structure, the complex is composed of an ATP-binding protein (RbsA), two transmembrane proteins (RbsC) and a solute-binding protein (RbsB).

It is found in the cell inner membrane. It carries out the reaction D-ribose(out) + ATP + H2O = D-ribose(in) + ADP + phosphate + H(+). Functionally, part of the ABC transporter complex RbsABC involved in ribose import. Responsible for energy coupling to the transport system. This Pseudomonas putida (strain ATCC 47054 / DSM 6125 / CFBP 8728 / NCIMB 11950 / KT2440) protein is Ribose import ATP-binding protein RbsA.